Consider the following 364-residue polypeptide: UDP-N-acetylglucosamine--N-acetylmuramyl-(pentapeptide) pyrophosphoryl-undecaprenol N-acetylglucosamine transferase (364 aa).

UDP-N-acetyl-alpha-D-glucosamine is bound by residues 10–12 (TGG), Asn124, Arg165, Ser193, Ile248, and Gln293.

It belongs to the glycosyltransferase 28 family. MurG subfamily.

It localises to the cell inner membrane. The catalysed reaction is di-trans,octa-cis-undecaprenyl diphospho-N-acetyl-alpha-D-muramoyl-L-alanyl-D-glutamyl-meso-2,6-diaminopimeloyl-D-alanyl-D-alanine + UDP-N-acetyl-alpha-D-glucosamine = di-trans,octa-cis-undecaprenyl diphospho-[N-acetyl-alpha-D-glucosaminyl-(1-&gt;4)]-N-acetyl-alpha-D-muramoyl-L-alanyl-D-glutamyl-meso-2,6-diaminopimeloyl-D-alanyl-D-alanine + UDP + H(+). Its pathway is cell wall biogenesis; peptidoglycan biosynthesis. Functionally, cell wall formation. Catalyzes the transfer of a GlcNAc subunit on undecaprenyl-pyrophosphoryl-MurNAc-pentapeptide (lipid intermediate I) to form undecaprenyl-pyrophosphoryl-MurNAc-(pentapeptide)GlcNAc (lipid intermediate II). The sequence is that of UDP-N-acetylglucosamine--N-acetylmuramyl-(pentapeptide) pyrophosphoryl-undecaprenol N-acetylglucosamine transferase from Geobacter sulfurreducens (strain ATCC 51573 / DSM 12127 / PCA).